The chain runs to 187 residues: Rusticyanin (187 aa).

A signal peptide spans 1–32; sequence MYTQNTMKKNWYVTVGAAAALAATVGMGTAMA. The Plastocyanin-like domain maps to 85–187; the sequence is SFEVHDKKNP…TGMFGKIVVK (103 aa). Residues H117, C170, H175, and M180 each contribute to the Cu cation site.

In terms of assembly, monomer. It depends on Cu cation as a cofactor.

Its subcellular location is the periplasm. In terms of biological role, electron carrier from cytochrome c552 to the A-type oxidase. The sequence is that of Rusticyanin (rus) from Acidithiobacillus ferrooxidans (strain ATCC 23270 / DSM 14882 / CIP 104768 / NCIMB 8455) (Ferrobacillus ferrooxidans (strain ATCC 23270)).